The primary structure comprises 213 residues: UPF0111 protein TM_0914 (213 aa).

It belongs to the UPF0111 family.

This is UPF0111 protein TM_0914 from Thermotoga maritima (strain ATCC 43589 / DSM 3109 / JCM 10099 / NBRC 100826 / MSB8).